Consider the following 176-residue polypeptide: Peptidyl-tRNA hydrolase (176 aa).

Residue Tyr-14 participates in tRNA binding. His-19 serves as the catalytic Proton acceptor. Residues Tyr-65, Asn-67, and Asn-113 each coordinate tRNA.

The protein belongs to the PTH family. In terms of assembly, monomer.

The protein resides in the cytoplasm. The enzyme catalyses an N-acyl-L-alpha-aminoacyl-tRNA + H2O = an N-acyl-L-amino acid + a tRNA + H(+). Functionally, hydrolyzes ribosome-free peptidyl-tRNAs (with 1 or more amino acids incorporated), which drop off the ribosome during protein synthesis, or as a result of ribosome stalling. In terms of biological role, catalyzes the release of premature peptidyl moieties from peptidyl-tRNA molecules trapped in stalled 50S ribosomal subunits, and thus maintains levels of free tRNAs and 50S ribosomes. This Phytoplasma mali (strain AT) protein is Peptidyl-tRNA hydrolase.